The sequence spans 875 residues: Valine--tRNA ligase (875 aa).

Residues 44–54 carry the 'HIGH' region motif; that stretch reads PNVTGKLHLGH. The short motif at 520 to 524 is the 'KMSKS' region element; it reads KMSKS. Lys-523 is an ATP binding site. Positions 804-875 form a coiled coil; it reads LEGLINIEEE…VRARLAQLKQ (72 aa).

It belongs to the class-I aminoacyl-tRNA synthetase family. ValS type 1 subfamily. Monomer.

It is found in the cytoplasm. It catalyses the reaction tRNA(Val) + L-valine + ATP = L-valyl-tRNA(Val) + AMP + diphosphate. Catalyzes the attachment of valine to tRNA(Val). As ValRS can inadvertently accommodate and process structurally similar amino acids such as threonine, to avoid such errors, it has a 'posttransfer' editing activity that hydrolyzes mischarged Thr-tRNA(Val) in a tRNA-dependent manner. The polypeptide is Valine--tRNA ligase (Anoxybacillus flavithermus (strain DSM 21510 / WK1)).